Here is a 366-residue protein sequence, read N- to C-terminus: Aminomethyltransferase (366 aa).

This sequence belongs to the GcvT family. The glycine cleavage system is composed of four proteins: P, T, L and H.

It catalyses the reaction N(6)-[(R)-S(8)-aminomethyldihydrolipoyl]-L-lysyl-[protein] + (6S)-5,6,7,8-tetrahydrofolate = N(6)-[(R)-dihydrolipoyl]-L-lysyl-[protein] + (6R)-5,10-methylene-5,6,7,8-tetrahydrofolate + NH4(+). In terms of biological role, the glycine cleavage system catalyzes the degradation of glycine. This chain is Aminomethyltransferase, found in Bordetella pertussis (strain Tohama I / ATCC BAA-589 / NCTC 13251).